The chain runs to 136 residues: Glutamate mutase sigma subunit (136 aa).

In terms of domain architecture, B12-binding spans 3–136 (KKKIVIGVIG…IIDLKKDFKI (134 aa)). Adenosylcob(III)alamin-binding positions include 13 to 17 (SDCHT), H16, and 61 to 63 (SSI).

Belongs to the methylaspartate mutase GlmS subunit family. In terms of assembly, heterotetramer composed of 2 epsilon subunits (GlmE) and 2 sigma subunits (GlmS). GlmE exists as a homodimer and GlmS as a monomer. It depends on adenosylcob(III)alamin as a cofactor.

The enzyme catalyses (2S,3S)-3-methyl-L-aspartate = L-glutamate. It functions in the pathway amino-acid degradation; L-glutamate degradation via mesaconate pathway; acetate and pyruvate from L-glutamate: step 1/4. Catalyzes the carbon skeleton rearrangement of L-glutamate to L-threo-3-methylaspartate ((2S,3S)-3-methylaspartate). In Fusobacterium nucleatum subsp. nucleatum (strain ATCC 25586 / DSM 15643 / BCRC 10681 / CIP 101130 / JCM 8532 / KCTC 2640 / LMG 13131 / VPI 4355), this protein is Glutamate mutase sigma subunit.